Here is a 334-residue protein sequence, read N- to C-terminus: L-lactate dehydrogenase B chain (334 aa).

NAD(+) contacts are provided by residues 30 to 58 and R100; that span reads GQVG…MEDR. Substrate contacts are provided by R107, N139, and R170. N139 serves as a coordination point for NAD(+). H194 acts as the Proton acceptor in catalysis. Substrate is bound at residue T249.

The protein belongs to the LDH/MDH superfamily. LDH family. In terms of assembly, homotetramer.

It localises to the cytoplasm. It carries out the reaction (S)-lactate + NAD(+) = pyruvate + NADH + H(+). It functions in the pathway fermentation; pyruvate fermentation to lactate; (S)-lactate from pyruvate: step 1/1. In terms of biological role, interconverts simultaneously and stereospecifically pyruvate and lactate with concomitant interconversion of NADH and NAD(+). The polypeptide is L-lactate dehydrogenase B chain (ldhb) (Fundulus heteroclitus (Killifish)).